Reading from the N-terminus, the 345-residue chain is Methionine import ATP-binding protein MetN (345 aa).

The 240-residue stretch at 2-241 folds into the ABC transporter domain; sequence IKLKNISKIF…PKTELAQEFI (240 aa). 38–45 lines the ATP pocket; it reads GASGAGKS.

The protein belongs to the ABC transporter superfamily. Methionine importer (TC 3.A.1.24) family. The complex is composed of two ATP-binding proteins (MetN), two transmembrane proteins (MetI) and a solute-binding protein (MetQ).

The protein localises to the cell inner membrane. It carries out the reaction L-methionine(out) + ATP + H2O = L-methionine(in) + ADP + phosphate + H(+). The catalysed reaction is D-methionine(out) + ATP + H2O = D-methionine(in) + ADP + phosphate + H(+). Part of the ABC transporter complex MetNIQ involved in methionine import. Responsible for energy coupling to the transport system. In Mannheimia succiniciproducens (strain KCTC 0769BP / MBEL55E), this protein is Methionine import ATP-binding protein MetN.